The sequence spans 528 residues: Endoglucanase 24 (528 aa).

Positions 1–24 are cleaved as a signal peptide; sequence MGSKTKGCCGWLIVALVASLVATA. Catalysis depends on Asp-109, which acts as the Nucleophile. N-linked (GlcNAc...) asparagine glycosylation is present at Asn-259. His-446 is an active-site residue. An N-linked (GlcNAc...) asparagine glycan is attached at Asn-487. Active-site residues include Asp-492 and Glu-501.

It belongs to the glycosyl hydrolase 9 (cellulase E) family.

It localises to the secreted. The enzyme catalyses Endohydrolysis of (1-&gt;4)-beta-D-glucosidic linkages in cellulose, lichenin and cereal beta-D-glucans.. The chain is Endoglucanase 24 from Oryza sativa subsp. japonica (Rice).